The chain runs to 400 residues: Phosphoglycerate kinase (400 aa).

Substrate-binding positions include 19-21 (DLN), R38, 61-64 (HLGR), R124, and R161. ATP is bound by residues K211, G299, E330, and 356-359 (GGDS).

Belongs to the phosphoglycerate kinase family. In terms of assembly, monomer.

It is found in the cytoplasm. The enzyme catalyses (2R)-3-phosphoglycerate + ATP = (2R)-3-phospho-glyceroyl phosphate + ADP. It functions in the pathway carbohydrate degradation; glycolysis; pyruvate from D-glyceraldehyde 3-phosphate: step 2/5. This is Phosphoglycerate kinase from Frankia alni (strain DSM 45986 / CECT 9034 / ACN14a).